The primary structure comprises 509 residues: NADH-quinone oxidoreductase subunit M (509 aa).

The helical transmembrane segment at 1-21 (MLLPWLILIPFIGGFLCWQTE) threads the bilayer. Topologically, residues 22 to 29 (RFGVKVPR) are cytoplasmic. Residues 30–50 (WIALITMGLTLALSLQLWLQG) traverse the membrane as a helical segment. At 51–82 (GYSLTQSAGIPQWQSEFDMPWIPRFGISIHLA) the chain is on the periplasmic side. The helical transmembrane segment at 83–103 (IDGLSLLMVVLTGLLGVLAVL) threads the bilayer. Residues 104–121 (CSWKEIEKYQGFFHLNLM) are Cytoplasmic-facing. Residues 122 to 142 (WILGGVIGVFLAIDMFLFFFF) form a helical membrane-spanning segment. The Periplasmic segment spans residues 143-173 (WEMMLVPMYFLIALWGHKASDGKTRITAATK). Residues 174–194 (FFIYTQASGLVMLIAILALVF) traverse the membrane as a helical segment. Over 195 to 221 (VHYNATGVWTFNYEELLNTPMSSGVEY) the chain is Cytoplasmic. Residues 222–242 (LLMLGFFIAFAVKMPVVPLHG) form a helical membrane-spanning segment. The Periplasmic portion of the chain corresponds to 243 to 258 (WLPDAHSQAPTAGSVD). The helical transmembrane segment at 259–279 (LAGILLKTAAYGLLRFSLPLF) threads the bilayer. Topologically, residues 280–285 (PNASAE) are cytoplasmic. Residues 286-306 (FAPIAMWLGVIGIFYGAWMAF) traverse the membrane as a helical segment. Over 307 to 313 (AQTDIKR) the chain is Periplasmic. A helical membrane pass occupies residues 314–334 (LIAYTSVSHMGFVLIAIYTGS). Residues 335-339 (QLAYQ) are Cytoplasmic-facing. The helical transmembrane segment at 340–360 (GAVIQMIAHGLSAAGLFILCG) threads the bilayer. At 361 to 382 (QLYERIHTRDMRMMGGLWSKMK) the chain is on the periplasmic side. The next 2 membrane-spanning stretches (helical) occupy residues 383-403 (WLPA…GTGN) and 404-424 (FVGE…ITVI). Position 425 (serine 425) is a topological domain, periplasmic. The chain crosses the membrane as a helical span at residues 426-446 (TFGLVFASVYSLAMLHRAYFG). Residues 447 to 464 (KAKSQIASQELPGMSLRE) are Cytoplasmic-facing. The helical transmembrane segment at 465–485 (LFMILLLVVLLVLLGFYPQPI) threads the bilayer. The Periplasmic segment spans residues 486-509 (LDTSHSAIGNIQQWFVNSVTTTRP).

It belongs to the complex I subunit 4 family. Composed of 13 different subunits. Subunits NuoA, H, J, K, L, M, N constitute the membrane sector of the complex.

It is found in the cell inner membrane. It catalyses the reaction a quinone + NADH + 5 H(+)(in) = a quinol + NAD(+) + 4 H(+)(out). In terms of biological role, NDH-1 shuttles electrons from NADH, via FMN and iron-sulfur (Fe-S) centers, to quinones in the respiratory chain. The immediate electron acceptor for the enzyme in this species is believed to be ubiquinone. Couples the redox reaction to proton translocation (for every two electrons transferred, four hydrogen ions are translocated across the cytoplasmic membrane), and thus conserves the redox energy in a proton gradient. This is NADH-quinone oxidoreductase subunit M (nuoM) from Escherichia coli O157:H7.